The primary structure comprises 158 residues: MKILGIDPGSRNCGYAIIEANKGKNILIEAGLIKIKPNTLQYQITELCEGLDLIFKNHSFDEVAIEDIFFAYNPKTVLKLAQFRGALSLKILQIHGDFAEYTPLQVKKAVTGKAKATKEQVAFMVKRLLGLSKDIKPLDITDAIAVALTHAANLRVRV.

Residues Asp7, Glu66, and Asp139 contribute to the active site. Mg(2+) is bound by residues Asp7, Glu66, and Asp139.

Belongs to the RuvC family. Homodimer which binds Holliday junction (HJ) DNA. The HJ becomes 2-fold symmetrical on binding to RuvC with unstacked arms; it has a different conformation from HJ DNA in complex with RuvA. In the full resolvosome a probable DNA-RuvA(4)-RuvB(12)-RuvC(2) complex forms which resolves the HJ. The cofactor is Mg(2+).

The protein resides in the cytoplasm. It carries out the reaction Endonucleolytic cleavage at a junction such as a reciprocal single-stranded crossover between two homologous DNA duplexes (Holliday junction).. In terms of biological role, the RuvA-RuvB-RuvC complex processes Holliday junction (HJ) DNA during genetic recombination and DNA repair. Endonuclease that resolves HJ intermediates. Cleaves cruciform DNA by making single-stranded nicks across the HJ at symmetrical positions within the homologous arms, yielding a 5'-phosphate and a 3'-hydroxyl group; requires a central core of homology in the junction. The consensus cleavage sequence is 5'-(A/T)TT(C/G)-3'. Cleavage occurs on the 3'-side of the TT dinucleotide at the point of strand exchange. HJ branch migration catalyzed by RuvA-RuvB allows RuvC to scan DNA until it finds its consensus sequence, where it cleaves and resolves the cruciform DNA. The chain is Crossover junction endodeoxyribonuclease RuvC from Campylobacter jejuni subsp. jejuni serotype O:6 (strain 81116 / NCTC 11828).